The chain runs to 416 residues: Phakinin (416 aa).

The tract at residues 1-48 (MSKRRVAADLPSGTNSSMPVQRHRVSSLRGTHSPSSLDSPPASRTSAV) is disordered. Residue Ser-2 is modified to N-acetylserine. Positions 2 to 115 (SKRRVAADLP…HTTVEDLGGC (114 aa)) are head. Phosphoserine occurs at positions 27, 33, 36, and 91. Residues 28–48 (LRGTHSPSSLDSPPASRTSAV) show a composition bias toward polar residues. The region spanning 105–416 (DHTTVEDLGG…HALLDREENN (312 aa)) is the IF rod domain. 3 coiled-coil regions span residues 116-146 (LVEY…SKAK), 170-249 (LENA…VKVL), and 308-402 (QTQE…LQKD). The tract at residues 397 to 416 (SQLQKDVASYHALLDREENN) is tail.

The protein belongs to the intermediate filament family. In terms of assembly, part of a complex required for lens intermediate filament formation composed of BFSP1, BFSP2 and CRYAA. Found in a complex composed of PPL (via C-terminal linker domain), BFSP1 and BFSP2 in the retinal lens. Within the complex interacts with PPL (via C-terminal linker domain) and with BFSP1. Identified in a complex that contains VIM, EZR, AHNAK, BFSP1, BFSP2, ANK2, PLEC, PRX and spectrin. Interacts with LGSN. Interacts with VIM. Detected in retina lens fiber cells (at protein level). Also expressed in the lens epithelium, abundantly expressed in the anterior and anterolateral epithelium, less frequently expressed nearer the lens coronal equator (at protein level).

The protein localises to the cell membrane. The protein resides in the cytoplasm. It is found in the cytoskeleton. It localises to the cell cortex. Its function is as follows. Required for the correct formation of lens intermediate filaments as part of a complex composed of BFSP1, BFSP2 and CRYAA. Plays a role in maintenance of retinal lens optical clarity. This chain is Phakinin (Bfsp2), found in Mus musculus (Mouse).